A 706-amino-acid polypeptide reads, in one-letter code: Methionine--tRNA ligase (706 aa).

A 'HIGH' region motif is present at residues 13–23; sequence PYANGSIHLGH. Positions 144, 147, 157, and 160 each coordinate Zn(2+). The 'KMSKS' region motif lies at 336–340; that stretch reads KMSKS. Lys339 provides a ligand contact to ATP. Residues 570 to 593 are disordered; it reads QQTMNTETESHSPQRHGQAQQHPV. The region spanning 604-706 is the tRNA-binding domain; the sequence is DFVKIDLRIA…SGAQPGMRVK (103 aa).

The protein belongs to the class-I aminoacyl-tRNA synthetase family. MetG type 1 subfamily. Homodimer. The cofactor is Zn(2+).

It is found in the cytoplasm. The catalysed reaction is tRNA(Met) + L-methionine + ATP = L-methionyl-tRNA(Met) + AMP + diphosphate. In terms of biological role, is required not only for elongation of protein synthesis but also for the initiation of all mRNA translation through initiator tRNA(fMet) aminoacylation. The polypeptide is Methionine--tRNA ligase (Nitrosomonas europaea (strain ATCC 19718 / CIP 103999 / KCTC 2705 / NBRC 14298)).